An 87-amino-acid chain; its full sequence is Large ribosomal subunit protein bL27 (87 aa).

Residues 1-25 form a disordered region; it reads MAHKKGASSSRNGRDSNAQRLGVKR. Residues 7-19 show a composition bias toward polar residues; it reads ASSSRNGRDSNAQ.

Belongs to the bacterial ribosomal protein bL27 family.

The protein is Large ribosomal subunit protein bL27 of Rhodococcus jostii (strain RHA1).